The following is a 318-amino-acid chain: MNKSFILSTGSYLPRKMLSNNEIASIVETSDEWIRQRTGIVQRHIADEGELTSDLAVNAAKSAIEKAKISVDEIDLIIVATTTPDKTFPSCATIVQSKLKCKNAFAFDVQAACSGFIYAVTVADSLIKSNNRIKYALVIGAEIMSRIVDWEDRSTCVLFGDGAGAVVMKSEMGRSGIISTNLYSDGNVDILCTNGGISSTGDSGKICMNGREVFKHAVDKLTASVEETLKCNNLKITDIDWLIPHQANIRIIEAVVKKLDFPIEKVINTVDKHANTSAASIPLALDYAIQESKIKSGNLVLLISIGAGLTWGSVLLHY.

Residues Cys-113 and His-245 contribute to the active site. The ACP-binding stretch occupies residues 246–250 (QANIR). Asn-275 is a catalytic residue.

This sequence belongs to the thiolase-like superfamily. FabH family. In terms of assembly, homodimer.

The protein resides in the cytoplasm. The catalysed reaction is malonyl-[ACP] + acetyl-CoA + H(+) = 3-oxobutanoyl-[ACP] + CO2 + CoA. It participates in lipid metabolism; fatty acid biosynthesis. Its function is as follows. Catalyzes the condensation reaction of fatty acid synthesis by the addition to an acyl acceptor of two carbons from malonyl-ACP. Catalyzes the first condensation reaction which initiates fatty acid synthesis and may therefore play a role in governing the total rate of fatty acid production. Possesses both acetoacetyl-ACP synthase and acetyl transacylase activities. Its substrate specificity determines the biosynthesis of branched-chain and/or straight-chain of fatty acids. The sequence is that of Beta-ketoacyl-[acyl-carrier-protein] synthase III from Wolbachia pipientis wMel.